The sequence spans 503 residues: UPF0522 protein C (503 aa).

An N-terminal signal peptide occupies residues 1-18 (MKLFILIILSICLALVNS). N-linked (GlcNAc...) asparagine glycans are attached at residues Asn330, Asn337, and Asn370.

Belongs to the UPF0522 family.

Its subcellular location is the secreted. The polypeptide is UPF0522 protein C (Dictyostelium discoideum (Social amoeba)).